The sequence spans 270 residues: Molybdenum storage protein subunit beta (270 aa).

Octamer consisting of 4 alpha and 4 beta chains.

It localises to the cytoplasm. Its function is as follows. Intracellular storage of molybdenum. Binds polyoxomolybdates. Can bind at least 90 molybdenum atoms per protein molecule. This is Molybdenum storage protein subunit beta from Azotobacter vinelandii (strain DJ / ATCC BAA-1303).